Here is a 229-residue protein sequence, read N- to C-terminus: Large ribosomal subunit protein uL1 (229 aa).

This sequence belongs to the universal ribosomal protein uL1 family. Part of the 50S ribosomal subunit.

Binds directly to 23S rRNA. The L1 stalk is quite mobile in the ribosome, and is involved in E site tRNA release. In terms of biological role, protein L1 is also a translational repressor protein, it controls the translation of the L11 operon by binding to its mRNA. In Phytoplasma australiense, this protein is Large ribosomal subunit protein uL1.